The primary structure comprises 314 residues: Pyridoxal 5'-phosphate synthase-like subunit PDX1.2 (314 aa).

Alanine 2 is modified (N-acetylalanine).

It belongs to the PdxS/SNZ family. As to quaternary structure, homodimer or heterodimer with PDX1.1 or PDX1.3. No interaction with PDX2. Expressed in callus tissues, flowers and roots. Weakly expressed in leaves and stems.

The protein localises to the cytoplasm. In terms of biological role, the protein has no function in the formation of pyridoxal 5'-phosphate. In Arabidopsis thaliana (Mouse-ear cress), this protein is Pyridoxal 5'-phosphate synthase-like subunit PDX1.2 (PDX12).